A 440-amino-acid polypeptide reads, in one-letter code: 2-phosphinomethylmalate synthase (440 aa).

In terms of domain architecture, Pyruvate carboxyltransferase spans 39–313; it reads VWLSETTHRD…GARVNLPAVN (275 aa).

Belongs to the alpha-IPM synthase/homocitrate synthase family. In terms of assembly, homodimer. Mn(2+) serves as cofactor. Co(2+) is required as a cofactor.

The enzyme catalyses 3-(hydrohydroxyphosphoryl)pyruvate + acetyl-CoA + H2O = phosphinomethylmalate + CoA + H(+). It participates in secondary metabolite biosynthesis; bialaphos biosynthesis. Strongly inhibited by p-chloromercuribenzoate (pCMB), iodoacetamide (IA) and EDTA. Involved in the biosynthesis of phosphinothricin tripeptide (PTT), also known as bialaphos (BA), a natural-product antibiotic and potent herbicide. Catalyzes the condensation berween phosphinopyruvic acid (PPA), an analog of oxalacetic acid, and acetyl-CoA to form R-2-phosphinomethylmalic acid (PMM). Can also act on oxaloacetate, but shows no activity when acetyl-CoA is substituted by propionyl-CoA or butyryl-CoA. In Streptomyces hygroscopicus, this protein is 2-phosphinomethylmalate synthase.